Here is a 140-residue protein sequence, read N- to C-terminus: Putative esterase MT1895 (140 aa).

This sequence belongs to the thioesterase PaaI family.

This Mycobacterium tuberculosis (strain CDC 1551 / Oshkosh) protein is Putative esterase MT1895.